The sequence spans 321 residues: Trem-like transcript 2 protein (321 aa).

The first 18 residues, 1-18 (MAPAFLLLLLLWPQGCVS), serve as a signal peptide directing secretion. Topologically, residues 19–268 (GPSADSVYTK…PSIRHQDVYS (250 aa)) are extracellular. Residues 20 to 121 (PSADSVYTKV…ILYPLMGFQL (102 aa)) form the Ig-like V-type domain. Disulfide bonds link Cys-41/Cys-105 and Cys-56/Cys-63. N-linked (GlcNAc...) asparagine glycosylation occurs at Asn-89. Polar residues-rich tracts occupy residues 189 to 220 (GYSF…NARD) and 227 to 241 (SIST…RSPT). Positions 189–241 (GYSFTATSTTSQGPRRTMGSQTVTASPSNARDSSAGPESISTKSGDLSTRSPT) are disordered. The helical transmembrane segment at 269–289 (TVLGVVLTLLVLMLIMVYGFW) threads the bilayer. The Cytoplasmic portion of the chain corresponds to 290 to 321 (KKRHMASYSMCSDPSTRDPPGRPEPYVEVYLI).

In terms of assembly, interacts with CD276 and this interaction enhances T-cell activation. As to expression, detected in cultured B-cells, T-cell leukemia and monocyte leukemia. Expressed constitutively on CD8 T-cells and induced on CD4 T-cells after activation.

It is found in the cell membrane. Its function is as follows. Cell surface receptor that may play a role in the innate and adaptive immune response. Acts as a counter-receptor for CD276 and interaction with CD276 on T-cells enhances T-cell activation. The sequence is that of Trem-like transcript 2 protein (TREML2) from Homo sapiens (Human).